We begin with the raw amino-acid sequence, 88 residues long: Small ribosomal subunit protein bS16 (88 aa).

This sequence belongs to the bacterial ribosomal protein bS16 family.

In Mycoplasma pneumoniae (strain ATCC 29342 / M129 / Subtype 1) (Mycoplasmoides pneumoniae), this protein is Small ribosomal subunit protein bS16.